A 440-amino-acid chain; its full sequence is Tyrosine--tRNA ligase (440 aa).

Y46 is a binding site for L-tyrosine. Residues P51–N60 carry the 'HIGH' region motif. Y181 and Q185 together coordinate L-tyrosine. Residues K241–S245 carry the 'KMSKS' region motif. K244 contacts ATP. Residues D373–G430 enclose the S4 RNA-binding domain.

The protein belongs to the class-I aminoacyl-tRNA synthetase family. TyrS type 1 subfamily. In terms of assembly, homodimer.

It localises to the cytoplasm. It carries out the reaction tRNA(Tyr) + L-tyrosine + ATP = L-tyrosyl-tRNA(Tyr) + AMP + diphosphate + H(+). Its function is as follows. Catalyzes the attachment of tyrosine to tRNA(Tyr) in a two-step reaction: tyrosine is first activated by ATP to form Tyr-AMP and then transferred to the acceptor end of tRNA(Tyr). In Bifidobacterium animalis subsp. lactis (strain AD011), this protein is Tyrosine--tRNA ligase.